The following is a 297-amino-acid chain: Nucleotide-binding protein Bxeno_A0336 (297 aa).

ATP is bound at residue 8-15; that stretch reads GISGSGKS. 57 to 60 provides a ligand contact to GTP; the sequence is DARS.

The protein belongs to the RapZ-like family.

In terms of biological role, displays ATPase and GTPase activities. In Paraburkholderia xenovorans (strain LB400), this protein is Nucleotide-binding protein Bxeno_A0336.